The sequence spans 530 residues: Hyccin 2 (530 aa).

Thr-30 and Thr-306 each carry phosphothreonine. A phosphoserine mark is found at Ser-321 and Ser-341. The tract at residues 328–410 is disordered; the sequence is RREGAEGVNG…DSVVRKQYVQ (83 aa). Positions 353–373 are enriched in polar residues; it reads SGASLSSQPIGTKPSSSSQRG. 4 positions are modified to phosphoserine: Ser-430, Ser-442, Ser-444, and Ser-491. Residues 498-530 form a disordered region; it reads GQAGEGKELLSPGAPLTKQSRSPSFNMQLISQV. Polar residues predominate over residues 514-530; the sequence is TKQSRSPSFNMQLISQV.

It belongs to the Hyccin family. Component of a phosphatidylinositol 4-kinase (PI4K) complex, composed of PI4KA, EFR3 (EFR3A or EFR3B), TTC7 (TTC7A or TTC7B) and HYCC (HYCC1 or HYCC2).

It localises to the cytoplasm. The protein resides in the cytosol. Its subcellular location is the cell membrane. Its function is as follows. Component of a complex required to localize phosphatidylinositol 4-kinase (PI4K) to the plasma membrane. This chain is Hyccin 2 (HYCC2), found in Pongo abelii (Sumatran orangutan).